Reading from the N-terminus, the 329-residue chain is MYQLKIEGQAPGTCGSGKSLLVSALANGIGFPYECASGGCGVCKFELLEGNVQSMWPDAPGLSSRDREKGNRHLACQCVALSDLRIKVAVQDKYVPTIPISRMEAEVVEVRALTHDLLSVRLRTDGPANFLPGQFCLVEAEQLPGVVRAYSMANLKNPEGIWEFYIKRVPTGRFSPWLFENRKEGARLFLTGPMGTSFFRPGTGRKSLCIGGGAGLSYAAAIARASMRETDKPVKLFYGSRTPRDAVRWIDIDIDEDKLEVVQAVTEDTDSLWQGPTGFIHQVVDAALLETLPEYEIYLAGPPPMVDATVRMLLGKGVPRDQIHFDAFF.

The 2Fe-2S ferredoxin-type domain maps to 2-92; that stretch reads YQLKIEGQAP…DLRIKVAVQD (91 aa). C35, C40, C43, and C76 together coordinate [2Fe-2S] cluster. The region spanning 100–200 is the FAD-binding FR-type domain; sequence ISRMEAEVVE…TGPMGTSFFR (101 aa).

In terms of assembly, monomer. Carbazole 1,9a-dioxygenase complex consists of a terminal oxygenase component CarAa, a ferredoxin reductase component CarAd and a ferredoxin component CarAc. [2Fe-2S] cluster is required as a cofactor. Requires FAD as cofactor.

It carries out the reaction 2 reduced [2Fe-2S]-[ferredoxin] + NAD(+) + H(+) = 2 oxidized [2Fe-2S]-[ferredoxin] + NADH. The catalysed reaction is 2 reduced [2Fe-2S]-[ferredoxin] + NADP(+) + H(+) = 2 oxidized [2Fe-2S]-[ferredoxin] + NADPH. Functionally, part of the multicomponent carbazole 1,9a-dioxygenase (CARDO), that converts carbazole (CAR) into 2-aminobiphenyl-2,3-diol. It can use both NAD and NADP as electron donors, but NAD is supposed to be the physiological electron donor. The sequence is that of Ferredoxin--NAD(P)(+) reductase CarAd (carAd) from Metapseudomonas resinovorans (Pseudomonas resinovorans).